We begin with the raw amino-acid sequence, 285 residues long: MLYLTKIRNAESEFTENEQKIADFLRANVSELQSVSSRQMAKQLGISQSSIVKFAQKLGAQGFTELRMALIGEYSASREKTNAMALHLHSSITSDDSLEVIARKLNREKELALEQTCALFDYARLQKIIEVISKAPFIQITGLGGSALVGRDLSFKLMKIGYRVACEADTHVQATVSQALKKGDVQIAISYSGSKKEIVLCAEAARKQGATVIAITSLADSPLRRLAHFTLDTVSGETEWRSSSMSTRTAQNSVTDLLFVGLVQLNDVESLKMIQRSSELTQRLK.

The 77-residue stretch at 1 to 77 folds into the HTH rpiR-type domain; that stretch reads MLYLTKIRNA…MALIGEYSAS (77 aa). The segment at residues 37–56 is a DNA-binding region (H-T-H motif); the sequence is SRQMAKQLGISQSSIVKFAQ. Residues 128 to 268 form the SIS domain; it reads IIEVISKAPF…FVGLVQLNDV (141 aa).

Homotetramer.

It participates in amino-sugar metabolism; N-acetylmuramate degradation [regulation]. Represses the expression of the murPQ operon involved in the uptake and degradation of N-acetylmuramic acid (MurNAc). Binds to two adjacent inverted repeats within the operator region. MurNAc 6-phosphate, the substrate of MurQ, is the specific inducer that weakens binding of MurR to the operator. This Escherichia coli (strain ATCC 8739 / DSM 1576 / NBRC 3972 / NCIMB 8545 / WDCM 00012 / Crooks) protein is HTH-type transcriptional regulator MurR.